Consider the following 396-residue polypeptide: S-adenosylmethionine synthase (396 aa).

His16 lines the ATP pocket. Residue Asp18 coordinates Mg(2+). Residue Glu44 coordinates K(+). Residues Glu57 and Gln100 each contribute to the L-methionine site. The interval 100 to 110 (QSVDIAQGVDR) is flexible loop. Residues 165–167 (DAK), Asp240, 246–247 (RK), Ala263, and Lys267 each bind ATP. L-methionine is bound at residue Asp240. Lys271 contributes to the L-methionine binding site.

The protein belongs to the AdoMet synthase family. As to quaternary structure, homotetramer; dimer of dimers. Requires Mg(2+) as cofactor. K(+) serves as cofactor.

The protein resides in the cytoplasm. The enzyme catalyses L-methionine + ATP + H2O = S-adenosyl-L-methionine + phosphate + diphosphate. It functions in the pathway amino-acid biosynthesis; S-adenosyl-L-methionine biosynthesis; S-adenosyl-L-methionine from L-methionine: step 1/1. Functionally, catalyzes the formation of S-adenosylmethionine (AdoMet) from methionine and ATP. The overall synthetic reaction is composed of two sequential steps, AdoMet formation and the subsequent tripolyphosphate hydrolysis which occurs prior to release of AdoMet from the enzyme. The polypeptide is S-adenosylmethionine synthase (Pseudomonas putida (strain ATCC 700007 / DSM 6899 / JCM 31910 / BCRC 17059 / LMG 24140 / F1)).